The sequence spans 612 residues: uncharacterized protein (612 aa).

Positions 176 to 196 are enriched in polar residues; it reads LVQRNNATTSPTTDSASENNE. Residues 176 to 203 form a disordered region; that stretch reads LVQRNNATTSPTTDSASENNESVPSLTS.

To yeast YNL034w.

This is an uncharacterized protein from Saccharomyces cerevisiae (strain ATCC 204508 / S288c) (Baker's yeast).